The sequence spans 453 residues: Pup--protein ligase (453 aa).

Residue Glu9 coordinates Mg(2+). Position 53 (Arg53) interacts with ATP. Tyr55 contacts Mg(2+). Asp57 (proton acceptor) is an active-site residue. Glu63 lines the Mg(2+) pocket. Thr66 and Trp420 together coordinate ATP.

The protein belongs to the Pup ligase/Pup deamidase family. Pup-conjugating enzyme subfamily.

It catalyses the reaction ATP + [prokaryotic ubiquitin-like protein]-L-glutamate + [protein]-L-lysine = ADP + phosphate + N(6)-([prokaryotic ubiquitin-like protein]-gamma-L-glutamyl)-[protein]-L-lysine.. Its pathway is protein degradation; proteasomal Pup-dependent pathway. It participates in protein modification; protein pupylation. In terms of biological role, catalyzes the covalent attachment of the prokaryotic ubiquitin-like protein modifier Pup to the proteasomal substrate proteins, thereby targeting them for proteasomal degradation. This tagging system is termed pupylation. The ligation reaction involves the side-chain carboxylate of the C-terminal glutamate of Pup and the side-chain amino group of a substrate lysine. The sequence is that of Pup--protein ligase from Kineococcus radiotolerans (strain ATCC BAA-149 / DSM 14245 / SRS30216).